A 285-amino-acid polypeptide reads, in one-letter code: NAD kinase (285 aa).

Residue Asp76 is the Proton acceptor of the active site. NAD(+) contacts are provided by residues 76–77 (DG), 151–152 (NE), His162, Arg179, Asp181, 192–197 (TAYSLS), and Gln252.

This sequence belongs to the NAD kinase family. Requires a divalent metal cation as cofactor.

The protein resides in the cytoplasm. It carries out the reaction NAD(+) + ATP = ADP + NADP(+) + H(+). In terms of biological role, involved in the regulation of the intracellular balance of NAD and NADP, and is a key enzyme in the biosynthesis of NADP. Catalyzes specifically the phosphorylation on 2'-hydroxyl of the adenosine moiety of NAD to yield NADP. The sequence is that of NAD kinase from Haemophilus influenzae (strain ATCC 51907 / DSM 11121 / KW20 / Rd).